Consider the following 707-residue polypeptide: Elongation factor G (707 aa).

In terms of domain architecture, tr-type G spans 8–288; sequence QFTRNIGIMA…AVCKFLPSPA (281 aa). GTP contacts are provided by residues 17–24, 85–89, and 139–142; these read AHIDAGKT, DTPGH, and NKMD. A disordered region spans residues 288 to 308; sequence ADTPTVEGTDPSDPNKVIERK.

It belongs to the TRAFAC class translation factor GTPase superfamily. Classic translation factor GTPase family. EF-G/EF-2 subfamily.

Its subcellular location is the cytoplasm. Functionally, catalyzes the GTP-dependent ribosomal translocation step during translation elongation. During this step, the ribosome changes from the pre-translocational (PRE) to the post-translocational (POST) state as the newly formed A-site-bound peptidyl-tRNA and P-site-bound deacylated tRNA move to the P and E sites, respectively. Catalyzes the coordinated movement of the two tRNA molecules, the mRNA and conformational changes in the ribosome. The polypeptide is Elongation factor G (Porphyromonas gingivalis (strain ATCC 33277 / DSM 20709 / CIP 103683 / JCM 12257 / NCTC 11834 / 2561)).